Reading from the N-terminus, the 297-residue chain is Homoserine kinase (297 aa).

82-92 (PLTRGLGSSAS) serves as a coordination point for ATP.

It belongs to the GHMP kinase family. Homoserine kinase subfamily.

The protein localises to the cytoplasm. It carries out the reaction L-homoserine + ATP = O-phospho-L-homoserine + ADP + H(+). It functions in the pathway amino-acid biosynthesis; L-threonine biosynthesis; L-threonine from L-aspartate: step 4/5. In terms of biological role, catalyzes the ATP-dependent phosphorylation of L-homoserine to L-homoserine phosphate. The chain is Homoserine kinase from Bacillus mycoides (strain KBAB4) (Bacillus weihenstephanensis).